The sequence spans 457 residues: Putative ankyrin repeat protein L112 (457 aa).

ANK repeat units lie at residues 62 to 91 (QRITLINYVVEKGYLDIIVYINNLKSNHNP), 104 to 132 (SKDTALWYSCKNNNLATTKYFINKGASIN), 133 to 162 (SSSLPLKTACIEGHLDTVKYLFSCGIEIIN), 193 to 219 (YINEAFVMACKYGYLDIAKYLFNLDCS), 220 to 249 (ITVDALYGACINGHIEVVEYLIGLGVDPRK), 251 to 279 (KCWAITSACQGGHLNIIEFLLSLGIKPKE), 281 to 309 (NVDAFYHACKTGNLEIAKYLKEIGADTIT), 310 to 339 (RRDWALELSARGGYLDVVKYIIELGVSQKS), 341 to 368 (NKALIDATLFCRVEVVEYLVDSGSDFRQ), 400 to 429 (NNNEPIKTVCHNGCIGILKLLIMYGVDYNP), and 431 to 457 (KDQLINIAKSNNQSAIIKYLEDLDTLK).

This Acanthamoeba polyphaga mimivirus (APMV) protein is Putative ankyrin repeat protein L112.